We begin with the raw amino-acid sequence, 118 residues long: Telomere bouquet protein 2 (118 aa).

As to quaternary structure, interacts with bqt1. The bqt1-bqt2-sad1 complex binds rap1.

It localises to the cytoplasm. Its subcellular location is the nucleus. The protein localises to the cytoskeleton. The protein resides in the microtubule organizing center. It is found in the spindle pole body. It localises to the chromosome. Its subcellular location is the telomere. Involved in chromosome segregation. During meiotic prophase, connects telomeres to the spindle pole body by forming a bridge between the telomere protein rap1 and the spindle pole body protein sad1. The sequence is that of Telomere bouquet protein 2 (bqt2) from Schizosaccharomyces pombe (strain 972 / ATCC 24843) (Fission yeast).